A 278-amino-acid chain; its full sequence is 3-methyl-2-oxobutanoate hydroxymethyltransferase (278 aa).

The Mg(2+) site is built by D43 and D82. 3-methyl-2-oxobutanoate is bound by residues 43–44 (DS), D82, and K112. E114 lines the Mg(2+) pocket. Catalysis depends on E181, which acts as the Proton acceptor.

The protein belongs to the PanB family. In terms of assembly, homodecamer; pentamer of dimers. Mg(2+) is required as a cofactor.

Its subcellular location is the cytoplasm. The enzyme catalyses 3-methyl-2-oxobutanoate + (6R)-5,10-methylene-5,6,7,8-tetrahydrofolate + H2O = 2-dehydropantoate + (6S)-5,6,7,8-tetrahydrofolate. It functions in the pathway cofactor biosynthesis; (R)-pantothenate biosynthesis; (R)-pantoate from 3-methyl-2-oxobutanoate: step 1/2. Functionally, catalyzes the reversible reaction in which hydroxymethyl group from 5,10-methylenetetrahydrofolate is transferred onto alpha-ketoisovalerate to form ketopantoate. In Bacillus cereus (strain B4264), this protein is 3-methyl-2-oxobutanoate hydroxymethyltransferase.